The sequence spans 826 residues: Zinc phosphodiesterase ELAC protein 2 (826 aa).

A mitochondrion-targeting transit peptide spans 1–16 (MWALCSLLRSAAGRTM). Polar residues predominate over residues 15-24 (TMSQGRTISQ). Disordered stretches follow at residues 15-51 (TMSQ…PSGC) and 189-231 (QRRG…VSQR). Over residues 27 to 38 (ARRERPRKDPLR) the composition is skewed to basic and acidic residues. A phosphoserine mark is found at serine 199, serine 208, serine 212, serine 229, serine 618, and serine 736. A compositionally biased stretch (basic and acidic residues) spans 208 to 224 (SPERSSDSESNENEPHL). A disordered region spans residues 798–826 (ELAGGLEDGEPQQKRAHTEEPQAKKVRAQ). Residues 808–820 (PQQKRAHTEEPQA) show a composition bias toward basic and acidic residues.

This sequence belongs to the RNase Z family. As to quaternary structure, homodimer. Interacts with PTCD1. Requires Zn(2+) as cofactor.

It is found in the mitochondrion. The protein resides in the mitochondrion matrix. The protein localises to the mitochondrion nucleoid. Its subcellular location is the nucleus. The catalysed reaction is Endonucleolytic cleavage of RNA, removing extra 3' nucleotides from tRNA precursor, generating 3' termini of tRNAs. A 3'-hydroxy group is left at the tRNA terminus and a 5'-phosphoryl group is left at the trailer molecule.. In terms of biological role, zinc phosphodiesterase, which displays mitochondrial tRNA 3'-processing endonuclease activity. Involved in tRNA maturation, by removing a 3'-trailer from precursor tRNA. Associates with mitochondrial DNA complexes at the nucleoids to initiate RNA processing and ribosome assembly. This Gorilla gorilla gorilla (Western lowland gorilla) protein is Zinc phosphodiesterase ELAC protein 2 (ELAC2).